We begin with the raw amino-acid sequence, 502 residues long: Lysine--tRNA ligase (502 aa).

Mg(2+)-binding residues include E413 and E420.

This sequence belongs to the class-II aminoacyl-tRNA synthetase family. As to quaternary structure, homodimer. Requires Mg(2+) as cofactor.

The protein localises to the cytoplasm. The enzyme catalyses tRNA(Lys) + L-lysine + ATP = L-lysyl-tRNA(Lys) + AMP + diphosphate. The sequence is that of Lysine--tRNA ligase (lysS) from Haemophilus influenzae (strain ATCC 51907 / DSM 11121 / KW20 / Rd).